The primary structure comprises 262 residues: MRSSFIFALLLIGAALAHPATDPIRSKRAVEVVEDDFSGEASGEASGEASGEFSGEGSGEGSGELSPEVEVTPLTISQLETLNNYAQQVQAEAQKLIHQANFVITEMTALAANAQNLGIMSSIVSTNSQIVLDSARLSLNETETETGNTTTVAPPTTCSTSAVCYSDEGCGSGKCIGALAGTCNCNSCVYGWPCQEDSACGGFIGACNTITATCDCFNAYAKHNMTLTDAFTNFCNVAKCNGGEDNVENCHGLPCNYGFCVC.

An N-terminal signal peptide occupies residues 1 to 17; sequence MRSSFIFALLLIGAALA. Residues 37-68 are disordered; the sequence is FSGEASGEASGEASGEFSGEGSGEGSGELSPE. Over residues 39–53 the composition is skewed to low complexity; sequence GEASGEASGEASGEF. N-linked (GlcNAc...) asparagine glycans are attached at residues N140, N148, and N224.

This is Chondroitin proteoglycan 3 (cpg-3) from Caenorhabditis briggsae.